A 301-amino-acid chain; its full sequence is Acetylglutamate kinase (301 aa).

Residues 72–73 (GG), Arg-94, and Asn-199 contribute to the substrate site.

This sequence belongs to the acetylglutamate kinase family. ArgB subfamily.

The protein localises to the cytoplasm. The enzyme catalyses N-acetyl-L-glutamate + ATP = N-acetyl-L-glutamyl 5-phosphate + ADP. The protein operates within amino-acid biosynthesis; L-arginine biosynthesis; N(2)-acetyl-L-ornithine from L-glutamate: step 2/4. Its function is as follows. Catalyzes the ATP-dependent phosphorylation of N-acetyl-L-glutamate. This chain is Acetylglutamate kinase, found in Azorhizobium caulinodans (strain ATCC 43989 / DSM 5975 / JCM 20966 / LMG 6465 / NBRC 14845 / NCIMB 13405 / ORS 571).